A 677-amino-acid chain; its full sequence is Pro-neuregulin-1, membrane-bound isoform (677 aa).

Positions 1–12 (MAEKKKVKEGKG) are enriched in basic and acidic residues. Disordered regions lie at residues 1 to 43 (MAEK…KEIK) and 78 to 106 (GAKNKPDSKPEHIKIRGKKKSSELQISKA). At 1–260 (MAEKKKVKEG…MEAEELYQKR (260 aa)) the chain is on the extracellular side. A compositionally biased stretch (basic residues) spans 13–24 (RKGKGKKDRKGK). Positions 37-132 (PKLKEIKTQS…GNDTVTVNVT (96 aa)) constitute an Ig-like C2-type domain. Cysteine 57 and cysteine 116 are disulfide-bonded. The span at 78–91 (GAKNKPDSKPEHIK) shows a compositional bias: basic and acidic residues. 2 N-linked (GlcNAc...) asparagine glycosylation sites follow: asparagine 124 and asparagine 130. Residues 188 to 232 (HLIKCSDKEKTYCVNGGECYVLNGITSSNQFMCKCKPGFTGARCT) enclose the EGF-like domain. 3 disulfide bridges follow: cysteine 192–cysteine 206, cysteine 200–cysteine 220, and cysteine 222–cysteine 231. A helical membrane pass occupies residues 261-280 (VLTITGICIDLLVVGDMCVV). Topologically, residues 281–677 (DAYCKTKKQR…RKMTCKTLFI (397 aa)) are cytoplasmic. A compositionally biased stretch (basic and acidic residues) spans 294 to 315 (NDRLRQSLRERNKNITNKDNRP). 5 disordered regions span residues 294 to 326 (NDRLRQSLRERNKNITNKDNRPHNPKNPPPRKN), 350 to 375 (ETSFSTSHYTSTTHHSTTVTQTPSHS), 397 to 418 (SVENSRHTSPTGPRGRLNGIGG), 457 to 479 (VEFKTPISPKSPCLETSPPESSL), and 503 to 617 (PPRL…FLSI). Residues 351 to 375 (TSFSTSHYTSTTHHSTTVTQTPSHS) show a composition bias toward low complexity. Polar residues predominate over residues 397-407 (SVENSRHTSPT). A compositionally biased stretch (basic and acidic residues) spans 505–515 (RLREKRYDRKT). Residues 568 to 578 (VNSRRQKRTKP) show a composition bias toward basic residues. A compositionally biased stretch (low complexity) spans 591-600 (DSSSESSTSE).

Belongs to the neuregulin family. Post-translationally, proteolytic cleavage close to the plasma membrane on the external face leads to the release of the soluble growth factor form. Extensive glycosylation precedes the proteolytic cleavage. In terms of tissue distribution, isoform alpha1 is expressed in brain and muscle. Isoform CRD is expressed in brain and spinal cord, but at very low level in muscle.

The protein localises to the cell membrane. It localises to the secreted. Direct ligand for the ERBB tyrosine kinase receptors. Induces expression of acetylcholine receptor in synaptic nuclei. The protein is Pro-neuregulin-1, membrane-bound isoform (nrg1) of Xenopus laevis (African clawed frog).